The sequence spans 194 residues: Histone H1.0 (194 aa).

M1 carries the N-acetylmethionine modification. Low complexity predominate over residues 1 to 11 (MTENSTSAPAA). The interval 1–29 (MTENSTSAPAAKPKRAKASKKSTDHPKYS) is disordered. At T2 the chain carries N-acetylthreonine; in Histone H1.0, N-terminally processed. One can recognise an H15 domain in the interval 24 to 97 (DHPKYSDMVV…GASGSFRLAK (74 aa)). R42 carries the post-translational modification Citrulline. The disordered stretch occupies residues 84 to 194 (TKGVGASGSF…SSAKRAGKKK (111 aa)). The residue at position 104 (S104) is an ADP-ribosylserine. The span at 105-194 (VAFKKTKKEI…SSAKRAGKKK (90 aa)) shows a compositional bias: basic residues.

The protein belongs to the histone H1/H5 family. In terms of processing, ADP-ribosylated on Ser-104 in response to DNA damage.

Its subcellular location is the nucleus. It localises to the chromosome. In terms of biological role, histones H1 are necessary for the condensation of nucleosome chains into higher-order structures. The histones H1.0 are found in cells that are in terminal stages of differentiation or that have low rates of cell division. The chain is Histone H1.0 (H1-0) from Pongo abelii (Sumatran orangutan).